A 363-amino-acid polypeptide reads, in one-letter code: 5-formaminoimidazole-4-carboxamide-1-(beta)-D-ribofuranosyl 5'-monophosphate synthetase (363 aa).

Histidine 29 and serine 96 together coordinate 5-amino-1-(5-phospho-beta-D-ribosyl)imidazole-4-carboxamide. Residues 118 to 354 (RDILRWEAER…ISREIKNAIE (237 aa)) form the ATP-grasp domain. ATP-binding positions include 148–210 (PEDI…TNFC) and glutamate 232. 5-amino-1-(5-phospho-beta-D-ribosyl)imidazole-4-carboxamide is bound at residue asparagine 260. Residues glutamine 299 and glutamate 312 each contribute to the Mg(2+) site.

The protein belongs to the phosphohexose mutase family. Mg(2+) is required as a cofactor. Mn(2+) serves as cofactor.

It carries out the reaction 5-amino-1-(5-phospho-beta-D-ribosyl)imidazole-4-carboxamide + formate + ATP = 5-formamido-1-(5-phospho-D-ribosyl)imidazole-4-carboxamide + ADP + phosphate. The protein operates within purine metabolism; IMP biosynthesis via de novo pathway; 5-formamido-1-(5-phospho-D-ribosyl)imidazole-4-carboxamide from 5-amino-1-(5-phospho-D-ribosyl)imidazole-4-carboxamide (formate route): step 1/1. Catalyzes the ATP- and formate-dependent formylation of 5-aminoimidazole-4-carboxamide-1-beta-d-ribofuranosyl 5'-monophosphate (AICAR) to 5-formaminoimidazole-4-carboxamide-1-beta-d-ribofuranosyl 5'-monophosphate (FAICAR) in the absence of folates. The protein is 5-formaminoimidazole-4-carboxamide-1-(beta)-D-ribofuranosyl 5'-monophosphate synthetase of Methanosphaera stadtmanae (strain ATCC 43021 / DSM 3091 / JCM 11832 / MCB-3).